The chain runs to 344 residues: Phenylalanine--tRNA ligase alpha subunit (344 aa).

Position 256 (Glu-256) interacts with Mg(2+).

Belongs to the class-II aminoacyl-tRNA synthetase family. Phe-tRNA synthetase alpha subunit type 1 subfamily. In terms of assembly, tetramer of two alpha and two beta subunits. Requires Mg(2+) as cofactor.

It is found in the cytoplasm. It carries out the reaction tRNA(Phe) + L-phenylalanine + ATP = L-phenylalanyl-tRNA(Phe) + AMP + diphosphate + H(+). The protein is Phenylalanine--tRNA ligase alpha subunit (pheS) of Halalkalibacterium halodurans (strain ATCC BAA-125 / DSM 18197 / FERM 7344 / JCM 9153 / C-125) (Bacillus halodurans).